We begin with the raw amino-acid sequence, 315 residues long: Methenyltetrahydromethanopterin cyclohydrolase (315 aa).

This sequence belongs to the MCH family.

It localises to the cytoplasm. It carries out the reaction 5,10-methenyl-5,6,7,8-tetrahydromethanopterin + H2O = N(5)-formyl-5,6,7,8-tetrahydromethanopterin + H(+). It participates in one-carbon metabolism; methanogenesis from CO(2); 5,10-methenyl-5,6,7,8-tetrahydromethanopterin from CO(2): step 3/3. Functionally, catalyzes the reversible interconversion of 5-formyl-H(4)MPT to methenyl-H(4)MPT(+). The chain is Methenyltetrahydromethanopterin cyclohydrolase from Methanospirillum hungatei JF-1 (strain ATCC 27890 / DSM 864 / NBRC 100397 / JF-1).